The following is a 158-amino-acid chain: Small ribosomal subunit protein uS7 (158 aa).

This sequence belongs to the universal ribosomal protein uS7 family. As to quaternary structure, part of the 30S ribosomal subunit. Contacts proteins S9 and S11.

Functionally, one of the primary rRNA binding proteins, it binds directly to 16S rRNA where it nucleates assembly of the head domain of the 30S subunit. Is located at the subunit interface close to the decoding center, probably blocks exit of the E-site tRNA. This is Small ribosomal subunit protein uS7 from Acidiphilium cryptum (strain JF-5).